A 135-amino-acid polypeptide reads, in one-letter code: Cytochrome b-c1 complex subunit 6, mitochondrial (135 aa).

Positions 1–70 are disordered; it reads MSFFRDLLES…ETADPLDTLR (70 aa). Over residues 19–64 the composition is skewed to acidic residues; the sequence is EPVEDVEVEQPEDAPEEEVSEETVEEEEDDDEDDDEDDEEEEETAD.

Belongs to the UQCRH/QCR6 family. As to quaternary structure, component of the ubiquinol-cytochrome c oxidoreductase (cytochrome b-c1 complex, complex III, CIII), a multisubunit enzyme composed of 10 subunits. The complex is composed of 3 respiratory subunits cytochrome b (COB), cytochrome c1 (CYT1) and Rieske protein (RIP1), 2 core protein subunits COR1 and QCR2, and 5 low-molecular weight protein subunits QCR6, QCR7, QCR8, QCR9 and QCR10. The complex exists as an obligatory dimer and forms supercomplexes (SCs) in the inner mitochondrial membrane with a monomer or a dimer of cytochrome c oxidase (complex IV, CIV), resulting in 2 different assemblies (supercomplexes III(2)IV and III(2)IV(2)).

The protein resides in the mitochondrion inner membrane. Functionally, component of the ubiquinol-cytochrome c oxidoreductase, a multisubunit transmembrane complex that is part of the mitochondrial electron transport chain which drives oxidative phosphorylation. The complex plays an important role in the uptake of multiple carbon sources present in different host niches. This is Cytochrome b-c1 complex subunit 6, mitochondrial from Candida albicans (strain SC5314 / ATCC MYA-2876) (Yeast).